Here is a 491-residue protein sequence, read N- to C-terminus: Zinc finger protein 655 (491 aa).

The disordered stretch occupies residues 1 to 52; it reads MEEIPAQEAAGSPRVQFQSLETQSECLSPEPQFVQDTDMEQGLTGDGETREE. The span at 15 to 26 shows a compositional bias: polar residues; sequence VQFQSLETQSEC. Glutamine 60 carries the phosphoserine modification. Residues lysine 77, lysine 190, and lysine 201 each participate in a glycyl lysine isopeptide (Lys-Gly) (interchain with G-Cter in SUMO2) cross-link. C2H2-type zinc fingers lie at residues 212-234, 240-262, 303-325, 330-353, 380-402, and 408-430; these read YKCD…QRIH, YKCK…KRIH, YKCS…QKIH, CKCT…RVHH, YTCS…QRIH, and HECN…HKMH.

This sequence belongs to the krueppel C2H2-type zinc-finger protein family. As to quaternary structure, interacts with VAV1 and CDK4. Interacts with INTS13; promoting association with the integrator complex.

It is found in the nucleus. Functionally, probable transcription factor. This chain is Zinc finger protein 655, found in Homo sapiens (Human).